We begin with the raw amino-acid sequence, 345 residues long: Eukaryotic translation initiation factor 3 subunit F (345 aa).

An MPN domain is found at 30 to 166 (VVIHPQALFS…TRAYISAPVG (137 aa)). Residues 308–345 (GGESGNAESGQRGGQRGGKGGRGGQQRTQDRSGEEARA) are disordered. Residues 318 to 331 (QRGGQRGGKGGRGG) are compositionally biased toward gly residues. Positions 335 to 345 (TQDRSGEEARA) are enriched in basic and acidic residues.

It belongs to the eIF-3 subunit F family. In terms of assembly, component of the eukaryotic translation initiation factor 3 (eIF-3) complex.

Its subcellular location is the cytoplasm. Component of the eukaryotic translation initiation factor 3 (eIF-3) complex, which is involved in protein synthesis of a specialized repertoire of mRNAs and, together with other initiation factors, stimulates binding of mRNA and methionyl-tRNAi to the 40S ribosome. The eIF-3 complex specifically targets and initiates translation of a subset of mRNAs involved in cell proliferation. The chain is Eukaryotic translation initiation factor 3 subunit F from Aspergillus oryzae (strain ATCC 42149 / RIB 40) (Yellow koji mold).